Consider the following 459-residue polypeptide: Ribulose bisphosphate carboxylase (459 aa).

Asparagine 111 serves as a coordination point for substrate. Catalysis depends on lysine 166, which acts as the Proton acceptor. Lysine 168 lines the substrate pocket. Lysine 191, aspartate 193, and glutamate 194 together coordinate Mg(2+). Lysine 191 carries the post-translational modification N6-carboxylysine. Histidine 287 serves as the catalytic Proton acceptor. Residues arginine 288, histidine 321, and serine 368 each coordinate substrate.

It belongs to the RuBisCO large chain family. Type II subfamily. Homodimer. The cofactor is Mg(2+).

It carries out the reaction 2 (2R)-3-phosphoglycerate + 2 H(+) = D-ribulose 1,5-bisphosphate + CO2 + H2O. It catalyses the reaction D-ribulose 1,5-bisphosphate + O2 = 2-phosphoglycolate + (2R)-3-phosphoglycerate + 2 H(+). Its function is as follows. RuBisCO catalyzes two reactions: the carboxylation of D-ribulose 1,5-bisphosphate, the primary event in carbon dioxide fixation, as well as the oxidative fragmentation of the pentose substrate. Both reactions occur simultaneously and in competition at the same active site. The sequence is that of Ribulose bisphosphate carboxylase from Dechloromonas aromatica (strain RCB).